Here is a 1358-residue protein sequence, read N- to C-terminus: MTDYILPGPKALSQFRVDNLIKDINSYTNSTSVINELRSCYIHYVNGIAQNLSEQDTKLLEVLLTYDSALDIANDPLARQLNDAVANNLPSSALGEDTYLIRVVPRSGTISPWSSKATNIAHVCGLQDKVQRIERGLALLIKTVPGFPLLENLNDISLKCVYDRMTQQLYLTEPPNTMSIFTHEEPKPLVHVPLTPKDTKQSPKDILSKANTELGLALDSGEMEYLIHAFVETMKRDPTDVELFMFAQVNSEHCRHKIFNADWTIDGIKQQFTLFQMIRNTHKLNPEYTISAYSDNAAVLDSENDAFFFAPNSTTKEWTSTKERIPLLIKVETHNHPTAVSPFPGAATGSGGEIRDEGATGRGSKTKCGLSGFSVSDLLIPGNEQPWELNIGKPYHIASALDIMIEAPLGSAAFNNEFGRPCINGYFRTLTTKVLNHQGKEEIRGFHKPIMIAGGFGTVRPQFALKNTPITPGSCLIVLGGQSMLIGLGGGAASSVASGEGSADLDFASVQRGNPEMERRCQQVIDACVALGNNNPIQSIHDVGAGGLSNALPELVHDNDLGAKFDIRKVLSLEPGMSPMEIWCNESQERYVLGVSPQDLSIFEEICKRERAPFAVVGHATAEQKLIVEDPLLKTTPIDLEMPILFGKPPKMSRETITEALNLPEANLSEIPSLQDAIQRVLNLPSVGSKSFLITIGDRSVTGLIDRDQFVGPWQVPVADVGVTGTSLGETIISTGEAMAMGEKPVNALISASASAKLSVAESLLNIFAADVKSLNHIKLSANWMSPASHQGEGSKLYEAVQALGLDLCPALGVAIPVGKDSMSMKMKWDDKEVTAPLSLNITAFAPVFNTSKTWTPLLNRNTDDSVLVLVDLSAKQETKSLGASALLQVYNQVGNKSPTVYDNAILKGFLESLIQLHQQKEDIVLAYHDRSDGGLLITLLEMAFASRCGLEINIDGGDLESQLTNLFNEELGAVFQISAKNLSKFEKILNENGVAKEYISIVGKPSFQSQEIKIINSTTNDVIYANSRSELEQTWSKTSYEMQKLRDNPKTAEEEFASITDDRDPGLQYALTYNPADDMKIGLELSSQRPKVAILREQGVNGQMEMAWCFQQAGFNSVDVTMTDLLEGRFHLDDFIGLAACGGFSYGDVLGAGAGWAKSVLYHEGVRSQFSKFFNERQDTFAFGACNGCQFLSRLKDIIPGCENWPSFERNVSEQYEARVCMVQISQEKDNSSEESVFLNGMAGSKLPIAVAHGEGKATFSKSAEQLEKFEKDGLCCIRYVDNYGNVTERFPFNPNGSTNGIAGIKSPNGRVLAMMPHPERVCRLEANSWYPEGKYEEWGGYGPWIRLFRSARRWVG.

The residue at position 2 (T2) is an N-acetylthreonine. The segment at 339 to 363 (AVSPFPGAATGSGGEIRDEGATGRG) is disordered. Residues 345-356 (GAATGSGGEIRD), 424-426 (NGY), and A719 contribute to the ATP site. Mg(2+)-binding residues include D720, E762, N766, and D930. Residue S932 participates in ATP binding. Residues 1093–1358 (VAILREQGVN…LFRSARRWVG (266 aa)) form the Glutamine amidotransferase type-1 domain. Residue C1187 is the Nucleophile of the active site. Active-site residues include H1319 and E1321.

This sequence in the N-terminal section; belongs to the FGAMS family.

The protein resides in the cytoplasm. It catalyses the reaction N(2)-formyl-N(1)-(5-phospho-beta-D-ribosyl)glycinamide + L-glutamine + ATP + H2O = 2-formamido-N(1)-(5-O-phospho-beta-D-ribosyl)acetamidine + L-glutamate + ADP + phosphate + H(+). Its pathway is purine metabolism; IMP biosynthesis via de novo pathway; 5-amino-1-(5-phospho-D-ribosyl)imidazole from N(2)-formyl-N(1)-(5-phospho-D-ribosyl)glycinamide: step 1/2. Its function is as follows. Phosphoribosylformylglycinamidine synthase involved in the purines biosynthetic pathway. Catalyzes the ATP-dependent conversion of formylglycinamide ribonucleotide (FGAR) and glutamine to yield formylglycinamidine ribonucleotide (FGAM) and glutamate. The polypeptide is Phosphoribosylformylglycinamidine synthase (ADE6) (Saccharomyces cerevisiae (strain ATCC 204508 / S288c) (Baker's yeast)).